A 496-amino-acid chain; its full sequence is MKEIESFLVYSSSILPECILIFSSIGILSIDLLSLPNEGDTFWSYSISLAALAISIIILLLQWNKEPVLTFSETFQISRFNDIFRFFLLICSFLCIPLSVDYIRCTKMPVTEFLLFVLTATLGGMFLCGANDLISIFVASECLALSSYLLSGYTKRDVRSNEAMMKYLLMGGASSSILVYGFSLPYGLSGGEIQLRGMVNGLINMQMYNSAGVSIAMIFILVGIGFKLSLVPFHQWTPDVYEGSPTPVVAFFSVTSKVAALALATRLFHILFSSLSNEWHLPLEILAILSMILGNLIAVTQTSMKRMLAYSSISQIGYILIGIIAGDSDNGYASMITYMLIYIFMNLGTFACITSFGLRTGTDNIRDYAGLYRKDPILTLSLVLCLLSLGGIPPLAGFFGKLYLFWCGWKAGLYFLVSIALFTSVISIYYYSRIIKLLFTERNKRITIYMQDYKGSPYFLIPNNSIGITMILCTIASTVPGILINPIIAIAQNTLF.

The next 14 membrane-spanning stretches (helical) occupy residues 13–33 (SILP…IDLL), 41–61 (TFWS…ILLL), 83–103 (IFRF…VDYI), 110–130 (VTEF…LCGA), 133–153 (LISI…LSGY), 168–188 (LLMG…PYGL), 213–233 (VSIA…LVPF), 245–265 (PTPV…ALAT), 279–299 (WHLP…LIAV), 307–327 (MLAY…IAGD), 338–358 (YMLI…SFGL), 380–400 (LSLV…GFFG), 413–435 (LYFL…SRII), and 470–490 (MILC…IIAI).

Belongs to the complex I subunit 2 family. As to quaternary structure, NDH is composed of at least 16 different subunits, 5 of which are encoded in the nucleus.

It is found in the plastid. The protein resides in the chloroplast thylakoid membrane. The catalysed reaction is a plastoquinone + NADH + (n+1) H(+)(in) = a plastoquinol + NAD(+) + n H(+)(out). It carries out the reaction a plastoquinone + NADPH + (n+1) H(+)(in) = a plastoquinol + NADP(+) + n H(+)(out). Functionally, NDH shuttles electrons from NAD(P)H:plastoquinone, via FMN and iron-sulfur (Fe-S) centers, to quinones in the photosynthetic chain and possibly in a chloroplast respiratory chain. The immediate electron acceptor for the enzyme in this species is believed to be plastoquinone. Couples the redox reaction to proton translocation, and thus conserves the redox energy in a proton gradient. This Psilotum nudum (Whisk fern) protein is NAD(P)H-quinone oxidoreductase subunit 2 A, chloroplastic.